We begin with the raw amino-acid sequence, 688 residues long: DNA ligase (688 aa).

NAD(+) contacts are provided by residues 38 to 42 (DEEYD), 87 to 88 (SL), and Glu118. Lys120 acts as the N6-AMP-lysine intermediate in catalysis. Residues Arg141, Glu175, Lys291, and Lys315 each contribute to the NAD(+) site. Zn(2+)-binding residues include Cys409, Cys412, Cys428, and Cys433. The 90-residue stretch at 590–679 (MKLDILKGLT…AELKGYNFDE (90 aa)) folds into the BRCT domain.

The protein belongs to the NAD-dependent DNA ligase family. LigA subfamily. The cofactor is Mg(2+). It depends on Mn(2+) as a cofactor.

The catalysed reaction is NAD(+) + (deoxyribonucleotide)n-3'-hydroxyl + 5'-phospho-(deoxyribonucleotide)m = (deoxyribonucleotide)n+m + AMP + beta-nicotinamide D-nucleotide.. In terms of biological role, DNA ligase that catalyzes the formation of phosphodiester linkages between 5'-phosphoryl and 3'-hydroxyl groups in double-stranded DNA using NAD as a coenzyme and as the energy source for the reaction. It is essential for DNA replication and repair of damaged DNA. The sequence is that of DNA ligase from Thermotoga petrophila (strain ATCC BAA-488 / DSM 13995 / JCM 10881 / RKU-1).